The chain runs to 152 residues: Ribosomal RNA large subunit methyltransferase H (152 aa).

S-adenosyl-L-methionine is bound by residues Leu68, Gly100, and 119-124 (FGPMTW).

It belongs to the RNA methyltransferase RlmH family. As to quaternary structure, homodimer.

The protein localises to the cytoplasm. It catalyses the reaction pseudouridine(1915) in 23S rRNA + S-adenosyl-L-methionine = N(3)-methylpseudouridine(1915) in 23S rRNA + S-adenosyl-L-homocysteine + H(+). Its function is as follows. Specifically methylates the pseudouridine at position 1915 (m3Psi1915) in 23S rRNA. The chain is Ribosomal RNA large subunit methyltransferase H from Rhodospirillum centenum (strain ATCC 51521 / SW).